The primary structure comprises 274 residues: Thymidylate synthase (274 aa).

Residue Arg-21 coordinates dUMP. Residue His-51 coordinates (6R)-5,10-methylene-5,6,7,8-tetrahydrofolate. Arg-123 to Arg-124 contributes to the dUMP binding site. Residue Cys-156 is the Nucleophile of the active site. Residues Arg-176–Asp-179, Asn-187, and His-217–Tyr-219 each bind dUMP. Asp-179 is a (6R)-5,10-methylene-5,6,7,8-tetrahydrofolate binding site. A (6R)-5,10-methylene-5,6,7,8-tetrahydrofolate-binding site is contributed by Ser-273.

Belongs to the thymidylate synthase family. Bacterial-type ThyA subfamily. In terms of assembly, homodimer.

It is found in the cytoplasm. It carries out the reaction dUMP + (6R)-5,10-methylene-5,6,7,8-tetrahydrofolate = 7,8-dihydrofolate + dTMP. Its pathway is pyrimidine metabolism; dTTP biosynthesis. Functionally, catalyzes the reductive methylation of 2'-deoxyuridine-5'-monophosphate (dUMP) to 2'-deoxythymidine-5'-monophosphate (dTMP) while utilizing 5,10-methylenetetrahydrofolate (mTHF) as the methyl donor and reductant in the reaction, yielding dihydrofolate (DHF) as a by-product. This enzymatic reaction provides an intracellular de novo source of dTMP, an essential precursor for DNA biosynthesis. The polypeptide is Thymidylate synthase (Francisella tularensis subsp. holarctica (strain FTNF002-00 / FTA)).